The sequence spans 102 residues: Cytochrome c-553 (102 aa).

The first 23 residues, 1-23 (MKRILVVMSICAALAFGVSAAMA), serve as a signal peptide directing secretion. Heme c contacts are provided by Cys33, Cys36, His37, and Met80.

In terms of processing, binds 1 heme c group covalently per subunit.

The protein localises to the periplasm. Natural electron acceptor for a formate dehydrogenase. The chain is Cytochrome c-553 from Nitratidesulfovibrio vulgaris (strain DSM 19637 / Miyazaki F) (Desulfovibrio vulgaris).